Consider the following 440-residue polypeptide: Deoxyguanosinetriphosphate triphosphohydrolase-like protein (440 aa).

The HD domain maps to 61-256; the sequence is RLIHSLEVSC…MEAADDLCYS (196 aa).

The protein belongs to the dGTPase family. Type 3 subfamily.

The protein is Deoxyguanosinetriphosphate triphosphohydrolase-like protein of Synechocystis sp. (strain ATCC 27184 / PCC 6803 / Kazusa).